We begin with the raw amino-acid sequence, 602 residues long: Probable beta-glucosidase btgE (602 aa).

Positions 1 to 18 are cleaved as a signal peptide; sequence MRGAFLAAAAAVAGTAMA. Disordered regions lie at residues 61–94 and 116–166; these read PPTLVPINTPAPEPSSSSSSEVPSVPSSESSVVT and GVDA…TSFS. Residues 74–94 are compositionally biased toward low complexity; sequence PSSSSSSEVPSVPSSESSVVT. Over residues 152-166 the composition is skewed to polar residues; it reads TSESPLPTPGVTSFS. Glu-443 serves as the catalytic Proton donor. Glu-538 functions as the Nucleophile in the catalytic mechanism.

This sequence belongs to the glycosyl hydrolase 17 family.

The protein resides in the secreted. Its subcellular location is the cell wall. The catalysed reaction is Hydrolysis of terminal, non-reducing beta-D-glucosyl residues with release of beta-D-glucose.. The protein operates within glycan metabolism; cellulose degradation. Beta-glucosidases are one of a number of cellulolytic enzymes involved in the degradation of cellulosic biomass. Catalyzes the last step releasing glucose from the inhibitory cellobiose. The chain is Probable beta-glucosidase btgE (btgE) from Aspergillus flavus (strain ATCC 200026 / FGSC A1120 / IAM 13836 / NRRL 3357 / JCM 12722 / SRRC 167).